Reading from the N-terminus, the 480-residue chain is Docking protein 1 (480 aa).

Methionine 1 bears the N-acetylmethionine mark. The PH domain maps to 3–119 (GALMEGPLFL…WVQILCRTAF (117 aa)). The residue at position 48 (serine 48) is a Phosphoserine. Positions 151-259 (EGSQFWVTSQ…QQQKAQGKVG (109 aa)) constitute an IRS-type PTB domain. Over residues 253-262 (KAQGKVGQGQ) the composition is skewed to low complexity. The segment at 253–328 (KAQGKVGQGQ…GSTPAGAGEG (76 aa)) is disordered. Residues 265 to 276 (TRTDSHDGETEG) are compositionally biased toward basic and acidic residues. 2 positions are modified to phosphoserine: serine 269 and serine 290. Residues tyrosine 295, tyrosine 336, and tyrosine 340 each carry the phosphotyrosine modification. Tyrosine 361 is subject to Phosphotyrosine; by INSR. At tyrosine 376 the chain carries Phosphotyrosine. Phosphotyrosine; by INSR is present on tyrosine 397. The interval 398–480 (ELPYNPATDD…RVGVKSEGST (83 aa)) is disordered. Tyrosine 408 carries the phosphotyrosine modification. Positions 410 to 423 (VPPPRSSKPTPAPK) are enriched in pro residues. Position 415 is a phosphoserine (serine 415). Residues 432–445 (SGTTAGSGSKGSDT) are compositionally biased toward low complexity. Over residues 446 to 455 (ALYSQVQKSG) the composition is skewed to polar residues. At tyrosine 448 the chain carries Phosphotyrosine.

This sequence belongs to the DOK family. Type A subfamily. In terms of assembly, interacts with RasGAP and INPP5D/SHIP1. Interacts directly with phosphorylated ITGB3. Interacts with SRMS (via the SH2 and SH3 domains). Constitutively tyrosine-phosphorylated. Phosphorylated by TEC. Phosphorylated by LYN. Phosphorylated on tyrosine residues by the insulin receptor kinase. Results in the negative regulation of the insulin signaling pathway. Phosphorylated on tyrosine residues by SRMS.

The protein localises to the cytoplasm. It localises to the nucleus. Functionally, DOK proteins are enzymatically inert adaptor or scaffolding proteins. They provide a docking platform for the assembly of multimolecular signaling complexes. DOK1 appears to be a negative regulator of the insulin signaling pathway. Modulates integrin activation by competing with talin for the same binding site on ITGB3. This chain is Docking protein 1 (Dok1), found in Rattus norvegicus (Rat).